The chain runs to 465 residues: Cysteine--tRNA ligase (465 aa).

Residue cysteine 27 coordinates Zn(2+). A 'HIGH' region motif is present at residues 29–39 (PTVYNFFHIGN). 3 residues coordinate Zn(2+): cysteine 207, histidine 232, and glutamate 236. The 'KMSKS' region motif lies at 264–268 (KMSKS). An ATP-binding site is contributed by lysine 267.

Belongs to the class-I aminoacyl-tRNA synthetase family. Monomer. Requires Zn(2+) as cofactor.

The protein resides in the cytoplasm. The enzyme catalyses tRNA(Cys) + L-cysteine + ATP = L-cysteinyl-tRNA(Cys) + AMP + diphosphate. This is Cysteine--tRNA ligase from Clostridium botulinum (strain Kyoto / Type A2).